Reading from the N-terminus, the 165-residue chain is 3-isopropylmalate dehydratase small subunit 2 (165 aa).

Belongs to the LeuD family. LeuD type 2 subfamily. In terms of assembly, heterodimer of LeuC and LeuD.

The enzyme catalyses (2R,3S)-3-isopropylmalate = (2S)-2-isopropylmalate. It participates in amino-acid biosynthesis; L-leucine biosynthesis; L-leucine from 3-methyl-2-oxobutanoate: step 2/4. Its function is as follows. Catalyzes the isomerization between 2-isopropylmalate and 3-isopropylmalate, via the formation of 2-isopropylmaleate. This is 3-isopropylmalate dehydratase small subunit 2 (leuD2) from Archaeoglobus fulgidus (strain ATCC 49558 / DSM 4304 / JCM 9628 / NBRC 100126 / VC-16).